Here is a 308-residue protein sequence, read N- to C-terminus: Acetyl-coenzyme A carboxylase carboxyl transferase subunit beta 1 (308 aa).

A CoA carboxyltransferase N-terminal domain is found at 25 to 294 (VWTKCTSCEQ…PLVVSVNESP (270 aa)). 4 residues coordinate Zn(2+): cysteine 29, cysteine 32, cysteine 48, and cysteine 51. Residues 29 to 51 (CTSCEQVLYHAELERNLEVCPKC) form a C4-type zinc finger. The interval 288–308 (VSVNESPNEEPYSVPEVDEKG) is disordered.

Belongs to the AccD/PCCB family. In terms of assembly, acetyl-CoA carboxylase is a heterohexamer composed of biotin carboxyl carrier protein (AccB), biotin carboxylase (AccC) and two subunits each of ACCase subunit alpha (AccA) and ACCase subunit beta (AccD). Requires Zn(2+) as cofactor.

It is found in the cytoplasm. It catalyses the reaction N(6)-carboxybiotinyl-L-lysyl-[protein] + acetyl-CoA = N(6)-biotinyl-L-lysyl-[protein] + malonyl-CoA. It functions in the pathway lipid metabolism; malonyl-CoA biosynthesis; malonyl-CoA from acetyl-CoA: step 1/1. Component of the acetyl coenzyme A carboxylase (ACC) complex. Biotin carboxylase (BC) catalyzes the carboxylation of biotin on its carrier protein (BCCP) and then the CO(2) group is transferred by the transcarboxylase to acetyl-CoA to form malonyl-CoA. The protein is Acetyl-coenzyme A carboxylase carboxyl transferase subunit beta 1 of Vibrio parahaemolyticus serotype O3:K6 (strain RIMD 2210633).